The primary structure comprises 318 residues: Glycine--tRNA ligase alpha subunit (318 aa).

Belongs to the class-II aminoacyl-tRNA synthetase family. Tetramer of two alpha and two beta subunits.

It localises to the cytoplasm. It catalyses the reaction tRNA(Gly) + glycine + ATP = glycyl-tRNA(Gly) + AMP + diphosphate. In Moraxella catarrhalis (Branhamella catarrhalis), this protein is Glycine--tRNA ligase alpha subunit (glyQ).